An 86-amino-acid polypeptide reads, in one-letter code: Putative membrane protein insertion efficiency factor (86 aa).

The segment at Pro-66 to Asn-86 is disordered.

It belongs to the UPF0161 family.

The protein localises to the cell inner membrane. Could be involved in insertion of integral membrane proteins into the membrane. The protein is Putative membrane protein insertion efficiency factor of Proteus mirabilis (strain HI4320).